A 312-amino-acid polypeptide reads, in one-letter code: Dehydrogenase/reductase SDR family member 7C (312 aa).

A signal peptide spans 1-18; the sequence is MGVMAMLMLPLLLLGISG. Positions 47, 49, 192, 196, and 227 each coordinate NAD(+). Catalysis depends on Y192, which acts as the Proton acceptor.

This sequence belongs to the short-chain dehydrogenases/reductases (SDR) family.

The protein localises to the sarcoplasmic reticulum membrane. It catalyses the reaction all-trans-retinol + NAD(+) = all-trans-retinal + NADH + H(+). Functionally, NADH-dependent oxidoreductase which catalyzes the oxidation of all-trans-retinol to all-trans-retinal. Plays a role in the regulation of cardiac and skeletal muscle metabolic functions. Maintains Ca(2+) intracellular homeostasis by repressing Ca(2+) release from the sarcoplasmic reticulum (SR) in myotubes, possibly through local alternations in NAD/NADH or retinol/retinal. Also plays a role in Ca(2+) homeostasis by controlling Ca(2+) overload in the cytosol and the SR in myotubes. Involved in glucose uptake into skeletal muscles and muscle performance by activating PI3K and mTORC2-mediated AKT1 phosphorylation signaling pathways, possibly through the action of its downstream catalytic product all-trans-retinoic acid. This chain is Dehydrogenase/reductase SDR family member 7C, found in Homo sapiens (Human).